A 436-amino-acid polypeptide reads, in one-letter code: Aminopeptidase C (436 aa).

Catalysis depends on residues C68, H356, and N378.

Belongs to the peptidase C1 family. As to quaternary structure, homohexamer.

It catalyses the reaction Inactivates bleomycin B2 (a cytotoxic glycometallopeptide) by hydrolysis of a carboxyamide bond of beta-aminoalanine, but also shows general aminopeptidase activity. The specificity varies somewhat with source, but amino acid arylamides of Met, Leu and Ala are preferred.. In terms of biological role, hydrolyzes naphthylamide-substituted amino acids as well as di- and tripeptides in which the half-cystine residue is involved in a disulfide loop, notably in oxytocin and vasopressin. Also has a bleomycin hydrolase activity. This chain is Aminopeptidase C (pepC), found in Lactococcus lactis subsp. lactis (strain IL1403) (Streptococcus lactis).